Here is a 317-residue protein sequence, read N- to C-terminus: Beta-ketoacyl-[acyl-carrier-protein] synthase III (317 aa).

Active-site residues include Cys-112 and His-244. Positions Gln-245–Arg-249 are ACP-binding. Asn-274 is an active-site residue.

It belongs to the thiolase-like superfamily. FabH family. As to quaternary structure, homodimer.

It is found in the cytoplasm. It carries out the reaction malonyl-[ACP] + acetyl-CoA + H(+) = 3-oxobutanoyl-[ACP] + CO2 + CoA. Its pathway is lipid metabolism; fatty acid biosynthesis. Its function is as follows. Catalyzes the condensation reaction of fatty acid synthesis by the addition to an acyl acceptor of two carbons from malonyl-ACP. Catalyzes the first condensation reaction which initiates fatty acid synthesis and may therefore play a role in governing the total rate of fatty acid production. Possesses both acetoacetyl-ACP synthase and acetyl transacylase activities. Its substrate specificity determines the biosynthesis of branched-chain and/or straight-chain of fatty acids. The polypeptide is Beta-ketoacyl-[acyl-carrier-protein] synthase III (Escherichia coli O9:H4 (strain HS)).